Consider the following 101-residue polypeptide: NADH-quinone oxidoreductase subunit K (101 aa).

3 helical membrane-spanning segments follow: residues 4 to 24 (LSHF…GIFL), 30 to 50 (IVLL…FIAF), and 61 to 81 (VFVF…LAIL).

Belongs to the complex I subunit 4L family. NDH-1 is composed of 14 different subunits. Subunits NuoA, H, J, K, L, M, N constitute the membrane sector of the complex.

Its subcellular location is the cell inner membrane. It carries out the reaction a quinone + NADH + 5 H(+)(in) = a quinol + NAD(+) + 4 H(+)(out). In terms of biological role, NDH-1 shuttles electrons from NADH, via FMN and iron-sulfur (Fe-S) centers, to quinones in the respiratory chain. The immediate electron acceptor for the enzyme in this species is believed to be ubiquinone. Couples the redox reaction to proton translocation (for every two electrons transferred, four hydrogen ions are translocated across the cytoplasmic membrane), and thus conserves the redox energy in a proton gradient. The chain is NADH-quinone oxidoreductase subunit K from Thiobacillus denitrificans (strain ATCC 25259 / T1).